We begin with the raw amino-acid sequence, 370 residues long: 3-isopropylmalate dehydrogenase (370 aa).

77–90 (GPKWDSVPYEVRPE) lines the NAD(+) pocket. Substrate-binding residues include Arg-97, Arg-107, Arg-135, and Asp-226. Mg(2+)-binding residues include Asp-226, Asp-250, and Asp-254. 290–302 (GSAPDIAGKGIAN) lines the NAD(+) pocket.

It belongs to the isocitrate and isopropylmalate dehydrogenases family. LeuB type 1 subfamily. In terms of assembly, homodimer. It depends on Mg(2+) as a cofactor. Requires Mn(2+) as cofactor.

It localises to the cytoplasm. It catalyses the reaction (2R,3S)-3-isopropylmalate + NAD(+) = 4-methyl-2-oxopentanoate + CO2 + NADH. It functions in the pathway amino-acid biosynthesis; L-leucine biosynthesis; L-leucine from 3-methyl-2-oxobutanoate: step 3/4. Functionally, catalyzes the oxidation of 3-carboxy-2-hydroxy-4-methylpentanoate (3-isopropylmalate) to 3-carboxy-4-methyl-2-oxopentanoate. The product decarboxylates to 4-methyl-2 oxopentanoate. The chain is 3-isopropylmalate dehydrogenase from Brucella melitensis biotype 1 (strain ATCC 23456 / CCUG 17765 / NCTC 10094 / 16M).